The sequence spans 1057 residues: Carbamoyl phosphate synthase large chain (1057 aa).

Positions 1 to 401 are carboxyphosphate synthetic domain; that stretch reads MPKRDDIQTI…SLLKAIRSLE (401 aa). ATP contacts are provided by arginine 129, arginine 169, glycine 175, glycine 176, lysine 208, isoleucine 210, glutamate 215, glycine 241, isoleucine 242, histidine 243, glutamine 284, and glutamate 298. The ATP-grasp 1 domain maps to 133–327; that stretch reads RTLMNDLNVP…IAKLAAKIAV (195 aa). Glutamine 284, glutamate 298, and asparagine 300 together coordinate Mg(2+). Glutamine 284, glutamate 298, and asparagine 300 together coordinate Mn(2+). Positions 402-546 are oligomerization domain; sequence YGVHHLGLPN…YGTYEDENES (145 aa). The carbamoyl phosphate synthetic domain stretch occupies residues 547 to 929; sequence IVTDKEKILV…ALYKGLTGSG (383 aa). The region spanning 671–861 is the ATP-grasp 2 domain; sequence EALLREISVP…MAQLAMRAIM (191 aa). Residues arginine 707, arginine 746, leucine 748, glutamate 752, glycine 777, valine 778, histidine 779, serine 780, glutamine 820, and glutamate 832 each coordinate ATP. Mg(2+) is bound by residues glutamine 820, glutamate 832, and asparagine 834. Residues glutamine 820, glutamate 832, and asparagine 834 each coordinate Mn(2+). The region spanning 930-1057 is the MGS-like domain; the sequence is FEVKDHGTVL…ESMTFTMRNV (128 aa). The segment at 930–1057 is allosteric domain; it reads FEVKDHGTVL…ESMTFTMRNV (128 aa).

The protein belongs to the CarB family. In terms of assembly, composed of two chains; the small (or glutamine) chain promotes the hydrolysis of glutamine to ammonia, which is used by the large (or ammonia) chain to synthesize carbamoyl phosphate. Tetramer of heterodimers (alpha,beta)4. The cofactor is Mg(2+). Mn(2+) serves as cofactor.

It catalyses the reaction hydrogencarbonate + L-glutamine + 2 ATP + H2O = carbamoyl phosphate + L-glutamate + 2 ADP + phosphate + 2 H(+). The catalysed reaction is hydrogencarbonate + NH4(+) + 2 ATP = carbamoyl phosphate + 2 ADP + phosphate + 2 H(+). It participates in amino-acid biosynthesis; L-arginine biosynthesis; carbamoyl phosphate from bicarbonate: step 1/1. The protein operates within pyrimidine metabolism; UMP biosynthesis via de novo pathway; (S)-dihydroorotate from bicarbonate: step 1/3. Its function is as follows. Large subunit of the glutamine-dependent carbamoyl phosphate synthetase (CPSase). CPSase catalyzes the formation of carbamoyl phosphate from the ammonia moiety of glutamine, carbonate, and phosphate donated by ATP, constituting the first step of 2 biosynthetic pathways, one leading to arginine and/or urea and the other to pyrimidine nucleotides. The large subunit (synthetase) binds the substrates ammonia (free or transferred from glutamine from the small subunit), hydrogencarbonate and ATP and carries out an ATP-coupled ligase reaction, activating hydrogencarbonate by forming carboxy phosphate which reacts with ammonia to form carbamoyl phosphate. In Staphylococcus epidermidis (strain ATCC 35984 / DSM 28319 / BCRC 17069 / CCUG 31568 / BM 3577 / RP62A), this protein is Carbamoyl phosphate synthase large chain.